The following is a 109-amino-acid chain: Protein FAM32A-like (109 aa).

Residues methionine 1 to lysine 48 are disordered. Over residues lysine 9–proline 20 the composition is skewed to low complexity. A compositionally biased stretch (basic residues) spans serine 21–glutamate 30.

The protein belongs to the FAM32 family.

It localises to the nucleus. In terms of biological role, may induce G2 arrest and apoptosis. May also increase cell sensitivity to apoptotic stimuli. This chain is Protein FAM32A-like (fam32al), found in Danio rerio (Zebrafish).